A 1183-amino-acid chain; its full sequence is Chromosome partition protein Smc (1183 aa).

P32–N39 lines the ATP pocket. Coiled-coil stretches lie at residues I167–N322 and A358–N497. Residues K409–E442 are disordered. The span at L419–E442 shows a compositional bias: basic and acidic residues. Residues L523–L632 enclose the SMC hinge domain. Coiled-coil stretches lie at residues G669–R941 and N980–K1025.

This sequence belongs to the SMC family. Homodimer.

It is found in the cytoplasm. In terms of biological role, required for chromosome condensation and partitioning. This Chlorobaculum tepidum (strain ATCC 49652 / DSM 12025 / NBRC 103806 / TLS) (Chlorobium tepidum) protein is Chromosome partition protein Smc.